The primary structure comprises 252 residues: O-methyltransferase hkm8 (252 aa).

S-adenosyl-L-methionine is bound by residues Glu73, 75–76 (GT), Ser81, and Asp100.

Belongs to the class I-like SAM-binding methyltransferase superfamily. Cation-dependent O-methyltransferase family.

The protein operates within secondary metabolite biosynthesis. In terms of biological role, O-methyltransferase; part of the gene cluster that mediates the biosynthesis of hancockiamides, an unusual new family of N-cinnamoylated piperazines. The NRPS hkm10 and the NmrA-like reductase hkm9 are proposed to convert two molecules of L-Phe to the intermediary piperazine called xenocockiamide A. Xenocockiamide A is then converted to hancockiamide D via a series of hydroxylations and O-methylations. The tyrosinase hkm6 may catalyze an aromatic hydroxylation, then the 2-oxoglutarate-dependent Fe(II) dioxygenase hkm4 and the FAD-dependent phenol hydroxylase hkm7 may catalyze consecutive hydroxylations to install 2 more hydroxy groups, and the methyltransferase hkm8 probably catalyzes two methylations using 2 molecules of S-adenosyl-L-methionine (SAM). The NRPS hkm11 activates and transfers trans-cinnamate supplied by the PAL hkm12 to hancockiamide D and produces hancockiamide A. NRPS Hkm11 has the flexibility to tolerate the bulky hancockiamide G as a substrate and the absence of the acetyl-transferase hkm3 opens up the opportunity for hkm11 to introduce a second N-cinnamoyl moiety. The cytochrome P450 monooxygenase hkm5 catalyzes the methylenedioxy bridge formation, converting hancockiamide A into hancockiamide G. Hkm5 can also convert hancockiamide B into hancockiamide C, and hancockiamide D into hancockiamide H. The N-acetyltransferase hkm3 finally transfers an acetyl group to 1-N of piperazine, converting hancockiamide A into hancockiamide B and hancockiamide G into hancockiamide C. The sequence is that of O-methyltransferase hkm8 from Aspergillus hancockii.